Reading from the N-terminus, the 203-residue chain is Apoptosis-associated speck-like protein containing a CARD (203 aa).

One can recognise a Pyrin domain in the interval 1 to 91; sequence MAESFKEHLQ…DDLLRNTGQS (91 aa). Positions 112-203 constitute a CARD domain; it reads VAFSKVNFID…FLMDDLEDAE (92 aa).

Self-associates (via pyrin and CARD domains). Interacts (via pyrin domain) with caspa (via pyrin domain). Interacts with caspb; the interaction only occurs in the presence of nlrp1. Component of NLRP1 inflammasomes. Inflammasomes are supramolecular complexes that assemble in the cytosol in response to pathogens and other damage-associated signals and play critical roles in innate immunity and inflammation. The NLRP1 inflammasome is composed of the signal sensor nlrp1, and the adapter pycard (asc), which recruit effector pro-inflammatory caspases caspa and/or caspb. The interaction between nlrp1 and pycard is required for the sequential recruitment of caspa and then caspb. Within the complex caspa is preferentially recruited first and this causes the cleavage of pro-il1b into the midformed il1b. This is followed by the recruitment of caspb, which is activated and cleaves the midformed il1b resulting in il1b maturation. Interacts (via pyrin domain) with NLP3X1 (via pyrin domain). Interacts with gbp4. In terms of tissue distribution, expressed in the kidney, intestine and gill. Expressed at low levels in the heart.

It localises to the cytoplasm. The protein resides in the inflammasome. In terms of biological role, functions as a key mediator in apoptosis and inflammation. Promotes caspase-mediated apoptosis. Induces proteolytic processing of caspa and caspa-dependent apoptosis. Involved in innate immune response by acting as an integral adapter in the assembly of various inflammasomes which recruit and activate caspase-1 leading to processing and secretion of pro-inflammatory cytokines. Caspase-1-dependent inflammation leads to macrophage pyroptosis, a form of cell death. The function as activating adapter in different types of inflammasomes is mediated by the pyrin and CARD domains and their homotypic interactions. Clustered PYCARD nucleates the formation of caspase-1 filaments through the interaction of their respective CARD domains, acting as a platform for of caspase-1 polymerization. Also involved in transcriptional activation of cytokines and chemokines independent of the inflammasome. This Danio rerio (Zebrafish) protein is Apoptosis-associated speck-like protein containing a CARD (pycard).